We begin with the raw amino-acid sequence, 941 residues long: UvrABC system protein A (941 aa).

31 to 38 contributes to the ATP binding site; sequence GLSGSGKS. Residues 253–280 form a C4-type zinc finger; sequence CPICGYSMRELEPRLFSFNNPAGACPTC. ABC transporter domains lie at 310-587 and 607-937; these read WDRR…PESL and ANPE…RFLK. 640–647 contacts ATP; it reads GVSGSGKS. The C4-type zinc finger occupies 740 to 766; it reads CEACQGDGVIKVEMHFLPDIYVPCDQC.

It belongs to the ABC transporter superfamily. UvrA family. As to quaternary structure, forms a heterotetramer with UvrB during the search for lesions.

It localises to the cytoplasm. Its function is as follows. The UvrABC repair system catalyzes the recognition and processing of DNA lesions. UvrA is an ATPase and a DNA-binding protein. A damage recognition complex composed of 2 UvrA and 2 UvrB subunits scans DNA for abnormalities. When the presence of a lesion has been verified by UvrB, the UvrA molecules dissociate. This is UvrABC system protein A from Salmonella typhi.